The chain runs to 680 residues: DNA ligase (680 aa).

NAD(+)-binding positions include 44 to 48 (DYIYD), 94 to 95 (SL), and Glu-124. The active-site N6-AMP-lysine intermediate is the Lys-126. The NAD(+) site is built by Arg-147, Glu-181, Lys-297, and Lys-321. Residues Cys-415, Cys-418, Cys-433, and Cys-438 each contribute to the Zn(2+) site. Positions 598-680 (DENSFFYGKK…VDEQVKEDGK (83 aa)) constitute a BRCT domain.

It belongs to the NAD-dependent DNA ligase family. LigA subfamily. Mg(2+) is required as a cofactor. Mn(2+) serves as cofactor.

The catalysed reaction is NAD(+) + (deoxyribonucleotide)n-3'-hydroxyl + 5'-phospho-(deoxyribonucleotide)m = (deoxyribonucleotide)n+m + AMP + beta-nicotinamide D-nucleotide.. DNA ligase that catalyzes the formation of phosphodiester linkages between 5'-phosphoryl and 3'-hydroxyl groups in double-stranded DNA using NAD as a coenzyme and as the energy source for the reaction. It is essential for DNA replication and repair of damaged DNA. In Leuconostoc mesenteroides subsp. mesenteroides (strain ATCC 8293 / DSM 20343 / BCRC 11652 / CCM 1803 / JCM 6124 / NCDO 523 / NBRC 100496 / NCIMB 8023 / NCTC 12954 / NRRL B-1118 / 37Y), this protein is DNA ligase.